Reading from the N-terminus, the 351-residue chain is Uroporphyrinogen decarboxylase (351 aa).

Residues arginine 25–arginine 29, aspartate 74, tyrosine 151, serine 206, and histidine 325 each bind substrate.

The protein belongs to the uroporphyrinogen decarboxylase family. In terms of assembly, homodimer.

It localises to the cytoplasm. The catalysed reaction is uroporphyrinogen III + 4 H(+) = coproporphyrinogen III + 4 CO2. Its pathway is porphyrin-containing compound metabolism; protoporphyrin-IX biosynthesis; coproporphyrinogen-III from 5-aminolevulinate: step 4/4. Catalyzes the decarboxylation of four acetate groups of uroporphyrinogen-III to yield coproporphyrinogen-III. The polypeptide is Uroporphyrinogen decarboxylase (Chlorobium limicola (strain DSM 245 / NBRC 103803 / 6330)).